The primary structure comprises 509 residues: MEEYQVYLELDRSRQQDFLYPFIFQEYIYGLVYGHDLNGSILVENVDYDNKSSLLIVKRLITRMYQQNHLIVSSNDFNKNQQFWGYNKNLYSQIISEAFAIVVEIPFYSQLRSSLEGAEVIKSYNKLRSIHAIFPFFEDKFTYLNYVSDVQIPYPIHLEILVQILRYWVKDPPLFHLLRSFLYQYCNWNSFINPKKSISSFSKSNPRFFFFLYNFYVCEYESIFLFLRKKSSHLRLTSFSVLFERIYFYAKIEHLVEVFPKDFLSTLSLFKDPLIHYVRYQGKSILASKNAPLLMNKWKYYLISLWQCYFNVWSQPGTIYINQLSDHSFHFFWGGYFSNVRLNLSVVRSQMLENSFLIEIVMKKLDTIVPIIPIIRSLAKAKFCNVLGHPISKPVWADLSDFGIIDRFLRIRRKISQYYNGSSKKKSLYRIKYILRLSCIKTLVRKHKSTVRAFLKRLGSEELLKEFFTEEEDILSLIFPRASSTLQRLYGGRIWYLDIIFSNDLVNHS.

This sequence belongs to the intron maturase 2 family. MatK subfamily.

The protein localises to the plastid. It localises to the chloroplast. Usually encoded in the trnK tRNA gene intron. Probably assists in splicing its own and other chloroplast group II introns. This Dalea purpurea (Violet prairie clover) protein is Maturase K.